A 250-amino-acid chain; its full sequence is Probable 2' cyclic ADP-D-ribose synthase TcpB (250 aa).

Positions 1-46 are disordered; the sequence is MSKEKQAQSKAHKAQQAISSAKSLSTQKSKMSELERATRDGAAIGK. The necessary and sufficient for phosphoinositide binding stretch occupies residues 1 to 117; that stretch reads MSKEKQAQSK…TASATMEAEE (117 aa). Low complexity predominate over residues 14 to 23; the sequence is AQQAISSAKS. Positions 30–39 are enriched in basic and acidic residues; sequence KMSELERATR. The TIR domain occupies 117 to 250; it reads EEYDFFISHA…EIAKELHSLI (134 aa). The active site involves glutamate 192.

Homodimer; may also form oligomers. Interacts with host TIRAP. Interacts with host MYD88. Interaction with host MYD88 was not confirmed by another study. Interacts with host TLR4. Abolishes the interaction of host TIRAP with TLR4.

It localises to the secreted. The protein resides in the host cell membrane. It catalyses the reaction NAD(+) + H2O = ADP-D-ribose + nicotinamide + H(+). The enzyme catalyses NAD(+) = 2'cADPR + nicotinamide + H(+). In terms of biological role, virulence factor that interferes with host Toll-like receptor 2 (TLR2) and TLR4 signaling, resulting in the reduction of dendritic cell maturation, inhibition of pro-inflammatory cytokine secretion and impaired NF-kappa-B activation in macrophages. Interferes with host TLR4 signaling by abolishing host TLR4-TIRAP interaction (but not host TIRAP-MYD88 interaction) and its downstream signaling. Inhibits host TLR 2 induced NF-kappa-B activation and TNF (tumor necrosis factor) secretion. Binds phosphoinositide (PtdIns) via its N-terminal domain. Has NAD(+) hydrolase (NADase) activity, catalyzes cleavage of NAD(+) into ADP-D-ribose (ADPR) and nicotinamide. Also generates a cyclization variant of cyclic ADPR (cADPR), termed v-cADPR (probably 2'cADPR). This chain is Probable 2' cyclic ADP-D-ribose synthase TcpB, found in Brucella melitensis biotype 1 (strain ATCC 23456 / CCUG 17765 / NCTC 10094 / 16M).